Here is a 375-residue protein sequence, read N- to C-terminus: Cyclic AMP receptor 2 (375 aa).

The Extracellular segment spans residues 1–10; sequence MTIMSDIIAQ. A helical membrane pass occupies residues 11–30; the sequence is RTILLIADFSSIIGCSLVLI. Residues 31–44 are Cytoplasmic-facing; it reads GFWRLKLLRNHITK. The helical transmembrane segment at 45 to 65 threads the bilayer; sequence IISLFCATSLFKDVISTIITL. The Extracellular portion of the chain corresponds to 66–82; that stretch reads LYKPDQTESGFPCYLHA. Residues 83–108 form a helical membrane-spanning segment; it reads IVITFGSLACWLWTLMLSFSIYNLIV. The Cytoplasmic segment spans residues 109 to 119; sequence RREPEPERFEK. The chain crosses the membrane as a helical span at residues 120-138; it reads FYFCLCYGLPLISTIVMLS. At 139–161 the chain is on the extracellular side; that stretch reads THIIQPVGGWCWIGDNYDGYRFG. Residues 162–180 traverse the membrane as a helical segment; sequence LFYGPFFFIWGTSAILVGL. The Cytoplasmic segment spans residues 181–204; it reads TSKYTYSVIRSSVSDNKDKHMTYQ. Serine 192 carries the phosphoserine modification. The helical transmembrane segment at 205-223 threads the bilayer; it reads FKLINYIVVFLVCWVFAIV. Over 224–234 the chain is Extracellular; it reads NRILNGLNQFP. The helical transmembrane segment at 235–259 threads the bilayer; it reads TVPNVLHTYFSVSHGFYASITFIYN. At 260–375 the chain is on the cytoplasmic side; sequence NPLMWRYFGA…NNINNKNDMI (116 aa). 2 positions are modified to phosphoserine: serine 298 and serine 303. The tract at residues 338–375 is disordered; sequence PKENENQNHHHHHHHHHHHNHYNNNNNNNNINNKNDMI. Residues 346 to 358 show a composition bias toward basic residues; it reads HHHHHHHHHHHNH. Residues 359–375 show a composition bias toward low complexity; the sequence is YNNNNNNNNINNKNDMI.

It belongs to the G-protein coupled receptor 5 family. In terms of processing, C-terminal Ser or Thr residues may be phosphorylated.

Its subcellular location is the membrane. In terms of biological role, receptor for cAMP. Coordinates the aggregation of individual cells into a multicellular organism and regulates the expression of a large number of developmentally regulated genes. The activity of this receptor is mediated by G proteins. Plays a key role during tip formation and late development; involved in cAMP-directed patterning of pre stalk cells as they sort before and during tip formation. The chain is Cyclic AMP receptor 2 (carB) from Dictyostelium discoideum (Social amoeba).